A 174-amino-acid chain; its full sequence is uncharacterized protein (174 aa).

This is an uncharacterized protein from Homo sapiens (Human).